The primary structure comprises 275 residues: Lectin (275 aa).

The N-terminal stretch at 1-30 (MASLQTQMISFYLIFLSILLTTIFFFKVNS) is a signal peptide. Positions 111 and 129 each coordinate D-glucose. Residues glutamate 149 and aspartate 151 each coordinate Mn(2+). Residues aspartate 151, phenylalanine 153, asparagine 155, and aspartate 159 each contribute to the Ca(2+) site. Residues aspartate 159 and histidine 166 each contribute to the Mn(2+) site. Residues 211–217 (NSLEEEN) constitute a propeptide that is removed on maturation. D-glucose is bound by residues glycine 246 and alanine 247. A propeptide spanning residues 270 to 275 (KQAADA) is cleaved from the precursor.

It belongs to the leguminous lectin family. In terms of assembly, heterotetramer of two alpha and two beta chains. In terms of processing, the mature form consists of two chains, alpha and beta, produced by cleavage of the immature protein. These remain cleaved, yet fold together to form one subunit.

D-mannose specific lectin. The sequence is that of Lectin from Lens culinaris subsp. orientalis (Oriental wild lentil).